Reading from the N-terminus, the 210-residue chain is uncharacterized protein (210 aa).

Disordered stretches follow at residues 1-21 (MHRL…TDAI) and 168-210 (EALQ…STAQ). A coiled-coil region spans residues 21–175 (IDSLDKRSDS…ELEALQQESS (155 aa)). Residues 174–184 (SSWLGDQSTAE) show a composition bias toward polar residues.

Belongs to the SNF7 family.

This is an uncharacterized protein from Schizosaccharomyces pombe (strain 972 / ATCC 24843) (Fission yeast).